A 1545-amino-acid chain; its full sequence is ATP-binding cassette sub-family C member 9 (1545 aa).

The Extracellular segment spans residues Met1 to Asn30. N-linked (GlcNAc...) asparagine glycosylation is present at Asn9. A helical membrane pass occupies residues Leu31–Ser51. At Gln52–Arg72 the chain is on the cytoplasmic side. The helical transmembrane segment at Trp73–Ser93 threads the bilayer. At Asp94–His101 the chain is on the extracellular side. The chain crosses the membrane as a helical span at residues Leu102–Tyr122. The Cytoplasmic portion of the chain corresponds to His123–Lys132. The helical transmembrane segment at Leu133 to Val153 threads the bilayer. Residues Lys154–Phe167 are Extracellular-facing. Residues Cys168–Ile188 form a helical membrane-spanning segment. At Arg189–Ser301 the chain is on the cytoplasmic side. The 298-residue stretch at Ile297–Lys594 folds into the ABC transmembrane type-1 1 domain. The chain crosses the membrane as a helical span at residues Thr302–Val322. At Gln323–Asn347 the chain is on the extracellular side. Asn330 and Asn331 each carry an N-linked (GlcNAc...) asparagine glycan. The helical transmembrane segment at Ala348–Ala368 threads the bilayer. Topologically, residues Ser369–Gln420 are cytoplasmic. A helical membrane pass occupies residues Leu421–Gly441. At Val442–Ser452 the chain is on the extracellular side. The helical transmembrane segment at Ala453–Lys473 threads the bilayer. Residues Leu474–Thr528 are Cytoplasmic-facing. A helical membrane pass occupies residues Phe529–Leu549. The Extracellular segment spans residues Ala550 to Ala568. Residues Phe569–Val589 form a helical membrane-spanning segment. The Cytoplasmic segment spans residues Arg590–Gly986. The 241-residue stretch at Ile668 to Thr908 folds into the ABC transporter 1 domain. Gly701–Ser708 contacts ATP. A disordered region spans residues Arg940 to Met963. Residues Glu947–Asn962 are compositionally biased toward acidic residues. The helical transmembrane segment at Phe987–Ile1007 threads the bilayer. Residues Leu990–Val1270 form the ABC transmembrane type-1 2 domain. At Asp1008–Phe1030 the chain is on the extracellular side. The chain crosses the membrane as a helical span at residues Tyr1031–Leu1051. Residues Thr1052 to Met1123 are Cytoplasmic-facing. The chain crosses the membrane as a helical span at residues Ile1124–Phe1144. Residues Ile1145–Ser1241 are Extracellular-facing. A helical membrane pass occupies residues Gly1242 to Val1262. The Cytoplasmic portion of the chain corresponds to Arg1263–Lys1545. The region spanning Ile1308–Met1542 is the ABC transporter 2 domain. Position 1342–1349 (Gly1342–Ser1349) interacts with ATP.

The protein belongs to the ABC transporter superfamily. ABCC family. Conjugate transporter (TC 3.A.1.208) subfamily. Interacts with KCNJ11. Interacts with KCNJ8. As to expression, expressed at high levels in heart, skeletal muscle and ovary. Moderate levels are found in brain, tongue and pancreatic islets. Low levels are found in lung, testis and adrenal gland. Expressed at very low levels in stomach, colon, thyroid and pituitary.

The protein localises to the membrane. In terms of biological role, subunit of ATP-sensitive potassium channels (KATP). Can form cardiac and smooth muscle-type KATP channels with KCNJ11. KCNJ11 forms the channel pore while ABCC9 is required for activation and regulation. Can form a sulfonylurea-sensitive but ATP-insensitive potassium channel with KCNJ8. The polypeptide is ATP-binding cassette sub-family C member 9 (Abcc9) (Rattus norvegicus (Rat)).